The chain runs to 164 residues: Transcription elongation factor GreA (164 aa).

Positions 11 to 76 (EESYDRLKAE…LQELLNNAKV (66 aa)) form a coiled coil.

The protein belongs to the GreA/GreB family.

Necessary for efficient RNA polymerase transcription elongation past template-encoded arresting sites. The arresting sites in DNA have the property of trapping a certain fraction of elongating RNA polymerases that pass through, resulting in locked ternary complexes. Cleavage of the nascent transcript by cleavage factors such as GreA or GreB allows the resumption of elongation from the new 3'terminus. GreA releases sequences of 2 to 3 nucleotides. The sequence is that of Transcription elongation factor GreA from Mycolicibacterium vanbaalenii (strain DSM 7251 / JCM 13017 / BCRC 16820 / KCTC 9966 / NRRL B-24157 / PYR-1) (Mycobacterium vanbaalenii).